Reading from the N-terminus, the 112-residue chain is 87 kDa annexin-binding protein (112 aa).

In terms of assembly, binds annexin.

The protein is 87 kDa annexin-binding protein of Physarum polycephalum (Slime mold).